Consider the following 450-residue polypeptide: Glucose-6-phosphate isomerase (450 aa).

Glutamate 291 (proton donor) is an active-site residue. Active-site residues include histidine 312 and lysine 426.

It belongs to the GPI family.

The protein localises to the cytoplasm. The enzyme catalyses alpha-D-glucose 6-phosphate = beta-D-fructose 6-phosphate. Its pathway is carbohydrate biosynthesis; gluconeogenesis. The protein operates within carbohydrate degradation; glycolysis; D-glyceraldehyde 3-phosphate and glycerone phosphate from D-glucose: step 2/4. In terms of biological role, catalyzes the reversible isomerization of glucose-6-phosphate to fructose-6-phosphate. The chain is Glucose-6-phosphate isomerase from Clostridium botulinum (strain Loch Maree / Type A3).